The chain runs to 473 residues: MLQVYNTLTREKEIFKPVKEGEISIYACGPTVYNMPHIGNYRTFLMTDNVLRALEYLGYRVKLVMNITDIDDKTIRDSKAAGMTLKDFTDKYTAEFFKGLDMLNIKRAFAYPRATENVDGMIELARKLIEKGLAYEKDGSVYYRISGFPEYGKLSRLNFDNILIGASVDVDEYDKDNPRDFALLKASTPEEIERGIYYDSPWGKIRPGWHIECSVMAMNSFGPTLDIHTGGVDLIFPHHENEIAQSEGATGKPFVCTWIHGEHLIVEGEKMSKSKRNVFTLPEIVEKYGGEVVRFMFLSVHYRKKLDYSEAFAENAKNNYLRLKETLDNLEFSLKGADDKSYPGDLETLKALPELETQFRHALEDDFNTPRALTVFRELSRTANLYLEAGKNRKVLEKVHTLYRKFSDVLGLFAQAGKEEIPEEVFRLVEEREAARKKKDWGTSDTLREKIRTLGYIIQDKKEGPNVKKAEES.

Position 28 (Cys-28) interacts with Zn(2+). Positions 30-40 (PTVYNMPHIGN) match the 'HIGH' region motif. Zn(2+) is bound by residues Cys-213, His-238, and Glu-242. Positions 270–274 (KMSKS) match the 'KMSKS' region motif. Residue Lys-273 coordinates ATP.

The protein belongs to the class-I aminoacyl-tRNA synthetase family. Zn(2+) serves as cofactor.

The protein localises to the cytoplasm. The enzyme catalyses tRNA(Cys) + L-cysteine + ATP = L-cysteinyl-tRNA(Cys) + AMP + diphosphate. The sequence is that of Cysteine--tRNA ligase from Methanosarcina acetivorans (strain ATCC 35395 / DSM 2834 / JCM 12185 / C2A).